The sequence spans 348 residues: Lipoyl synthase, mitochondrial (348 aa).

Residues C105, C110, C116, C136, C140, and C143 each coordinate [4Fe-4S] cluster. The 221-residue stretch at E121–L341 folds into the Radical SAM core domain.

It belongs to the radical SAM superfamily. Lipoyl synthase family. [4Fe-4S] cluster serves as cofactor.

It is found in the mitochondrion. The enzyme catalyses [[Fe-S] cluster scaffold protein carrying a second [4Fe-4S](2+) cluster] + N(6)-octanoyl-L-lysyl-[protein] + 2 oxidized [2Fe-2S]-[ferredoxin] + 2 S-adenosyl-L-methionine + 4 H(+) = [[Fe-S] cluster scaffold protein] + N(6)-[(R)-dihydrolipoyl]-L-lysyl-[protein] + 4 Fe(3+) + 2 hydrogen sulfide + 2 5'-deoxyadenosine + 2 L-methionine + 2 reduced [2Fe-2S]-[ferredoxin]. It participates in protein modification; protein lipoylation via endogenous pathway; protein N(6)-(lipoyl)lysine from octanoyl-[acyl-carrier-protein]: step 2/2. Catalyzes the radical-mediated insertion of two sulfur atoms into the C-6 and C-8 positions of the octanoyl moiety bound to the lipoyl domains of lipoate-dependent enzymes, thereby converting the octanoylated domains into lipoylated derivatives. The protein is Lipoyl synthase, mitochondrial (LIP1) of Ricinus communis (Castor bean).